A 251-amino-acid polypeptide reads, in one-letter code: Probable transcriptional regulatory protein MMAR_2098 (251 aa).

Belongs to the TACO1 family.

The protein localises to the cytoplasm. This is Probable transcriptional regulatory protein MMAR_2098 from Mycobacterium marinum (strain ATCC BAA-535 / M).